The following is a 220-amino-acid chain: Deoxyribose-phosphate aldolase (220 aa).

The active-site Proton donor/acceptor is Asp-89. The active-site Schiff-base intermediate with acetaldehyde is the Lys-151. Residue Lys-180 is the Proton donor/acceptor of the active site.

Belongs to the DeoC/FbaB aldolase family. DeoC type 1 subfamily.

It localises to the cytoplasm. The enzyme catalyses 2-deoxy-D-ribose 5-phosphate = D-glyceraldehyde 3-phosphate + acetaldehyde. It functions in the pathway carbohydrate degradation; 2-deoxy-D-ribose 1-phosphate degradation; D-glyceraldehyde 3-phosphate and acetaldehyde from 2-deoxy-alpha-D-ribose 1-phosphate: step 2/2. Functionally, catalyzes a reversible aldol reaction between acetaldehyde and D-glyceraldehyde 3-phosphate to generate 2-deoxy-D-ribose 5-phosphate. This Streptococcus uberis (strain ATCC BAA-854 / 0140J) protein is Deoxyribose-phosphate aldolase.